The following is a 304-amino-acid chain: UDP-3-O-acyl-N-acetylglucosamine deacetylase (304 aa).

The Zn(2+) site is built by H79, H238, and D242. The active-site Proton donor is the H265.

Belongs to the LpxC family. It depends on Zn(2+) as a cofactor.

It carries out the reaction a UDP-3-O-[(3R)-3-hydroxyacyl]-N-acetyl-alpha-D-glucosamine + H2O = a UDP-3-O-[(3R)-3-hydroxyacyl]-alpha-D-glucosamine + acetate. It functions in the pathway glycolipid biosynthesis; lipid IV(A) biosynthesis; lipid IV(A) from (3R)-3-hydroxytetradecanoyl-[acyl-carrier-protein] and UDP-N-acetyl-alpha-D-glucosamine: step 2/6. Its function is as follows. Catalyzes the hydrolysis of UDP-3-O-myristoyl-N-acetylglucosamine to form UDP-3-O-myristoylglucosamine and acetate, the committed step in lipid A biosynthesis. This is UDP-3-O-acyl-N-acetylglucosamine deacetylase from Photobacterium profundum (strain SS9).